Consider the following 302-residue polypeptide: N-acetylmuramic acid 6-phosphate etherase (302 aa).

The 164-residue stretch at 58 to 221 folds into the SIS domain; it reads IGESFLNGGR…STGAMVKTGK (164 aa). Glu86 functions as the Proton donor in the catalytic mechanism. Glu117 is an active-site residue.

It belongs to the GCKR-like family. MurNAc-6-P etherase subfamily. As to quaternary structure, homodimer.

It catalyses the reaction N-acetyl-D-muramate 6-phosphate + H2O = N-acetyl-D-glucosamine 6-phosphate + (R)-lactate. Its pathway is amino-sugar metabolism; N-acetylmuramate degradation. Its function is as follows. Specifically catalyzes the cleavage of the D-lactyl ether substituent of MurNAc 6-phosphate, producing GlcNAc 6-phosphate and D-lactate. This is N-acetylmuramic acid 6-phosphate etherase from Clostridium botulinum (strain Langeland / NCTC 10281 / Type F).